A 145-amino-acid polypeptide reads, in one-letter code: Small ribosomal subunit protein eS12A (145 aa).

This sequence belongs to the eukaryotic ribosomal protein eS12 family. As to quaternary structure, component of the small ribosomal subunit (SSU). Mature yeast ribosomes consist of a small (40S) and a large (60S) subunit. The 40S small subunit contains 1 molecule of ribosomal RNA (18S rRNA) and at least 33 different proteins. The large 60S subunit contains 3 rRNA molecules (25S, 5.8S and 5S rRNA) and at least 46 different proteins.

It is found in the cytoplasm. In terms of biological role, component of the ribosome, a large ribonucleoprotein complex responsible for the synthesis of proteins in the cell. The small ribosomal subunit (SSU) binds messenger RNAs (mRNAs) and translates the encoded message by selecting cognate aminoacyl-transfer RNA (tRNA) molecules. The large subunit (LSU) contains the ribosomal catalytic site termed the peptidyl transferase center (PTC), which catalyzes the formation of peptide bonds, thereby polymerizing the amino acids delivered by tRNAs into a polypeptide chain. The nascent polypeptides leave the ribosome through a tunnel in the LSU and interact with protein factors that function in enzymatic processing, targeting, and the membrane insertion of nascent chains at the exit of the ribosomal tunnel. In Schizosaccharomyces pombe (strain 972 / ATCC 24843) (Fission yeast), this protein is Small ribosomal subunit protein eS12A (rps1201).